Here is a 399-residue protein sequence, read N- to C-terminus: O-glucosyltransferase rumi homolog (399 aa).

A signal peptide spans 1–18 (MHFIIGIVICLSLSVIQS). 2 N-linked (GlcNAc...) asparagine glycosylation sites follow: Asn19 and Asn67. Intrachain disulfides connect Cys66/Cys73, Cys71/Cys373, Cys118/Cys124, and Cys277/Cys300. Residue Asp149 is the Proton donor/acceptor of the active site. The interaction with the consensus sequence C-X-S-X-[PA]-C in peptide substrates stretch occupies residues 189–194 (AIALYP). UDP-alpha-D-glucose-binding positions include 224–228 (RGSRT), Arg232, 271–273 (VTL), and 289–293 (AASFR).

Belongs to the glycosyltransferase 90 family.

It is found in the endoplasmic reticulum lumen. Its subcellular location is the secreted. It functions in the pathway protein modification; protein glycosylation. Functionally, protein O-glucosyltransferase. Catalyzes the reaction that attaches glucose through an O-glycosidic linkage to a conserved serine residue found in the consensus sequence C-X-S-X-[PA]-C in epidermal growth factor-like repeats. Regulates Notch signaling by glucosylating Notch in the ER, glucosylation is required for the correct folding and cleavage of Notch. This Anopheles gambiae (African malaria mosquito) protein is O-glucosyltransferase rumi homolog.